The primary structure comprises 87 residues: Beta-toxin Ct1a (87 aa).

The first 19 residues, 1-19 (MNSLLMITACLALIGTVWA), serve as a signal peptide directing secretion. The region spanning 20-85 (KEGYLVNHST…VWPLPKKTCN (66 aa)) is the LCN-type CS-alpha/beta domain. 4 disulfide bridges follow: cysteine 31–cysteine 84, cysteine 35–cysteine 60, cysteine 44–cysteine 65, and cysteine 48–cysteine 67. Asparagine amide is present on asparagine 85.

This sequence belongs to the long (4 C-C) scorpion toxin superfamily. Sodium channel inhibitor family. Beta subfamily. Expressed by the venom gland.

It localises to the secreted. Its function is as follows. Beta toxins bind voltage-independently at site-4 of sodium channels (Nav) and shift the voltage of activation toward more negative potentials thereby affecting sodium channel activation and promoting spontaneous and repetitive firing. Is lethal to mice but does not show toxicity to freshwater shrimp and crickets. The protein is Beta-toxin Ct1a of Centruroides tecomanus (Scorpion).